The following is a 437-amino-acid chain: Cobyrinate a,c-diamide synthase (437 aa).

The 190-residue stretch at 241-430 folds into the GATase cobBQ-type domain; that stretch reads KIAVAKDEAF…AHVHFFGNLD (190 aa). Residue Cys323 is the Nucleophile of the active site.

It belongs to the CobB/CbiA family. It depends on Mg(2+) as a cofactor.

It carries out the reaction cob(II)yrinate + 2 L-glutamine + 2 ATP + 2 H2O = cob(II)yrinate a,c diamide + 2 L-glutamate + 2 ADP + 2 phosphate + 2 H(+). It participates in cofactor biosynthesis; adenosylcobalamin biosynthesis; cob(II)yrinate a,c-diamide from sirohydrochlorin (anaerobic route): step 10/10. Functionally, catalyzes the ATP-dependent amidation of the two carboxylate groups at positions a and c of cobyrinate, using either L-glutamine or ammonia as the nitrogen source. This is Cobyrinate a,c-diamide synthase from Clostridium acetobutylicum (strain ATCC 824 / DSM 792 / JCM 1419 / IAM 19013 / LMG 5710 / NBRC 13948 / NRRL B-527 / VKM B-1787 / 2291 / W).